The primary structure comprises 247 residues: Adenylyl-sulfate kinase (247 aa).

A disordered region spans residues Met1–Val24. Gly55 to Ser62 lines the ATP pocket. Catalysis depends on Ser146, which acts as the Phosphoserine intermediate.

Belongs to the APS kinase family.

It carries out the reaction adenosine 5'-phosphosulfate + ATP = 3'-phosphoadenylyl sulfate + ADP + H(+). It participates in sulfur metabolism; hydrogen sulfide biosynthesis; sulfite from sulfate: step 2/3. Functionally, catalyzes the synthesis of activated sulfate. In Rhodopirellula baltica (strain DSM 10527 / NCIMB 13988 / SH1), this protein is Adenylyl-sulfate kinase.